The following is a 107-amino-acid chain: Large ribosomal subunit protein uL24 (107 aa).

This sequence belongs to the universal ribosomal protein uL24 family. As to quaternary structure, part of the 50S ribosomal subunit.

In terms of biological role, one of two assembly initiator proteins, it binds directly to the 5'-end of the 23S rRNA, where it nucleates assembly of the 50S subunit. Functionally, one of the proteins that surrounds the polypeptide exit tunnel on the outside of the subunit. This is Large ribosomal subunit protein uL24 from Gluconacetobacter diazotrophicus (strain ATCC 49037 / DSM 5601 / CCUG 37298 / CIP 103539 / LMG 7603 / PAl5).